The primary structure comprises 467 residues: Variant surface glycoprotein 7 (467 aa).

The segment covering 77-87 has biased composition (polar residues); that stretch reads TIAAGATNTKL. The tract at residues 77-133 is disordered; that stretch reads TIAAGATNTKLSGHHPNQGRRGRRRSSSARPNNSKGNSPSKRAGGAVRGETPASGRL. The span at 93-103 shows a compositional bias: basic residues; that stretch reads NQGRRGRRRSS. The segment covering 107 to 116 has biased composition (polar residues); sequence PNNSKGNSPS. 2 N-linked (GlcNAc...) asparagine glycosylation sites follow: asparagine 108 and asparagine 252. The tract at residues 382–407 is disordered; it reads AEKVENPRSQGNPETAENKKEGGNTA. Asparagine 416 is a glycosylation site (N-linked (GlcNAc...) asparagine). Aspartate 444 carries the GPI-anchor amidated aspartate lipid modification. Residues 445 to 467 constitute a propeptide, removed in mature form; the sequence is SSFLLSKQFALSVVSAAFAALLF.

It is found in the cell membrane. In terms of biological role, VSG forms a coat on the surface of the parasite. The trypanosome evades the immune response of the host by expressing a series of antigenically distinct VSGs from an estimated 1000 VSG genes. This chain is Variant surface glycoprotein 7, found in Trypanosoma brucei rhodesiense.